The following is a 173-amino-acid chain: MPRTQRNDNFIDKSFTVMADLILKLLPTNNQAKEAFAYYRDGMSAQADGEYAEALENYYEALNLEDDPNDRSYILYNIGLIHASNGEHDQALEYYHQALENNPRMPQALNNIAVIFHYRGEKAKETGNSRDANSYFDQAAEYWKQAISLAPNNYIEAQNWLKTTGRSNKEVFF.

3 TPR repeats span residues 35-68 (AFAY…EDDP), 72-105 (SYIL…NPRM), and 120-153 (GEKA…APNN).

Belongs to the Ycf3 family.

It is found in the cellular thylakoid membrane. Essential for the assembly of the photosystem I (PSI) complex. May act as a chaperone-like factor to guide the assembly of the PSI subunits. The polypeptide is Photosystem I assembly protein Ycf3 (Trichodesmium erythraeum (strain IMS101)).